A 333-amino-acid polypeptide reads, in one-letter code: D-fructose 1,6-bisphosphatase class 2/sedoheptulose 1,7-bisphosphatase (333 aa).

Mn(2+) is bound by residues Asp33, Glu57, Asp85, and Glu88. Substrate-binding positions include 88–90, Tyr119, 164–166, and 186–188; these read EGT, RTR, and DGD. Glu213 lines the Mn(2+) pocket.

Belongs to the FBPase class 2 family. In terms of assembly, homotetramer. Mn(2+) is required as a cofactor.

It carries out the reaction beta-D-fructose 1,6-bisphosphate + H2O = beta-D-fructose 6-phosphate + phosphate. The catalysed reaction is D-sedoheptulose 1,7-bisphosphate + H2O = D-sedoheptulose 7-phosphate + phosphate. It participates in carbohydrate biosynthesis; Calvin cycle. Functionally, catalyzes the hydrolysis of fructose 1,6-bisphosphate (Fru 1,6-P2) and sedoheptulose 1,7-bisphosphate (Sed 1,7-P2) to fructose 6-phosphate and sedoheptulose 7-phosphate, respectively. The sequence is that of D-fructose 1,6-bisphosphatase class 2/sedoheptulose 1,7-bisphosphatase from Prochlorococcus marinus (strain MIT 9301).